The chain runs to 199 residues: UPF0056 membrane protein bbp_399 (199 aa).

The next 6 helical transmembrane spans lie at 7-29, 39-58, 71-93, 108-130, 137-156, and 176-198; these read VTIL…SILK, ILIR…LFAG, TVSV…PTYE, FLVP…MLLS, ILYL…VILL, and LMGL…SWFY.

It belongs to the UPF0056 (MarC) family.

It is found in the cell membrane. This Buchnera aphidicola subsp. Baizongia pistaciae (strain Bp) protein is UPF0056 membrane protein bbp_399.